A 928-amino-acid polypeptide reads, in one-letter code: DNA-binding protein RFX6 (928 aa).

Disordered stretches follow at residues 1 to 22 (MAKV…QVSP) and 53 to 102 (PGGA…AADL). Over residues 92–101 (SHDSKTKAAD) the composition is skewed to basic and acidic residues. Positions 124-199 (TLQWLEENYI…YHYYGIGIKE (76 aa)) form a DNA-binding region, RFX-type winged-helix.

The protein belongs to the RFX family. In terms of assembly, interacts with RFX3.

The protein localises to the nucleus. Functionally, transcription factor required to direct islet cell differentiation during endocrine pancreas development. Specifically required for the differentiation of 4 of the 5 islet cell types and for the production of insulin. Not required for pancreatic PP (polypeptide-producing) cells differentiation. Acts downstream of NEUROG3 and regulates the transcription factors involved in beta-cell maturation and function, thereby restricting the expression of the beta-cell differentiation and specification genes, and thus the beta-cell fate choice. Activates transcription by forming a heterodimer with RFX3 and binding to the X-box in the promoter of target genes. Involved in glucose-stimulated insulin secretion by promoting insulin and L-type calcium channel gene transcription. In Ailuropoda melanoleuca (Giant panda), this protein is DNA-binding protein RFX6 (RFX6).